The following is a 409-amino-acid chain: Peptidase T (409 aa).

Zn(2+) is bound at residue His78. Residue Asp80 is part of the active site. Asp140 contributes to the Zn(2+) binding site. Residue Glu174 is the Proton acceptor of the active site. The Zn(2+) site is built by Glu175, Asp197, and His379.

This sequence belongs to the peptidase M20B family. It depends on Zn(2+) as a cofactor.

The protein localises to the cytoplasm. The catalysed reaction is Release of the N-terminal residue from a tripeptide.. Cleaves the N-terminal amino acid of tripeptides. The chain is Peptidase T from Aliivibrio fischeri (strain ATCC 700601 / ES114) (Vibrio fischeri).